Reading from the N-terminus, the 248-residue chain is Pyruvate formate-lyase-activating enzyme (248 aa).

A Radical SAM core domain is found at valine 17 to lysine 248. [4Fe-4S] cluster is bound by residues cysteine 31, cysteine 35, and cysteine 38. Residues phenylalanine 37 to histidine 39, glycine 80, aspartate 135 to lysine 137, and histidine 208 each bind S-adenosyl-L-methionine.

It belongs to the organic radical-activating enzymes family. [4Fe-4S] cluster is required as a cofactor.

The protein resides in the cytoplasm. The catalysed reaction is glycyl-[formate C-acetyltransferase] + reduced [flavodoxin] + S-adenosyl-L-methionine = glycin-2-yl radical-[formate C-acetyltransferase] + semiquinone [flavodoxin] + 5'-deoxyadenosine + L-methionine + H(+). Functionally, activation of pyruvate formate-lyase under anaerobic conditions by generation of an organic free radical, using S-adenosylmethionine and reduced flavodoxin as cosubstrates to produce 5'-deoxy-adenosine. The sequence is that of Pyruvate formate-lyase-activating enzyme (pflA) from Listeria innocua serovar 6a (strain ATCC BAA-680 / CLIP 11262).